Reading from the N-terminus, the 505-residue chain is UDP-N-acetylmuramoyl-L-alanyl-D-glutamate--2,6-diaminopimelate ligase (505 aa).

Residue S42 coordinates UDP-N-acetyl-alpha-D-muramoyl-L-alanyl-D-glutamate. 126–132 (GTNGKTT) provides a ligand contact to ATP. UDP-N-acetyl-alpha-D-muramoyl-L-alanyl-D-glutamate contacts are provided by residues 168–169 (TT), S195, Q201, and R203. K235 is modified (N6-carboxylysine). Residues R399, 423–426 (DNPR), G474, and E478 each bind meso-2,6-diaminopimelate. Positions 423 to 426 (DNPR) match the Meso-diaminopimelate recognition motif motif.

Belongs to the MurCDEF family. MurE subfamily. It depends on Mg(2+) as a cofactor. In terms of processing, carboxylation is probably crucial for Mg(2+) binding and, consequently, for the gamma-phosphate positioning of ATP.

The protein resides in the cytoplasm. The catalysed reaction is UDP-N-acetyl-alpha-D-muramoyl-L-alanyl-D-glutamate + meso-2,6-diaminopimelate + ATP = UDP-N-acetyl-alpha-D-muramoyl-L-alanyl-gamma-D-glutamyl-meso-2,6-diaminopimelate + ADP + phosphate + H(+). It participates in cell wall biogenesis; peptidoglycan biosynthesis. In terms of biological role, catalyzes the addition of meso-diaminopimelic acid to the nucleotide precursor UDP-N-acetylmuramoyl-L-alanyl-D-glutamate (UMAG) in the biosynthesis of bacterial cell-wall peptidoglycan. This chain is UDP-N-acetylmuramoyl-L-alanyl-D-glutamate--2,6-diaminopimelate ligase, found in Synechocystis sp. (strain ATCC 27184 / PCC 6803 / Kazusa).